The sequence spans 420 residues: UDP-glucuronic acid decarboxylase 1 (420 aa).

Met1 carries the N-acetylmethionine modification. Topologically, residues 1-19 (MVSKGLLRLVSSVNRRKMK) are cytoplasmic. Residues 20–40 (LLLGIALFAYAASVWGNFVNM) traverse the membrane as a helical; Signal-anchor for type II membrane protein segment. Residues 41 to 420 (RSIQENGELK…RVKKGRTRHS (380 aa)) are Lumenal-facing. The residue at position 94 (Thr94) is a Phosphothreonine. Residues Gly98, Phe99, Val100, Asp119, Asn120, Phe122, Thr123, Gly124, Asp144, and Val145 each coordinate NAD(+). UDP-alpha-D-glucuronate contacts are provided by Leu149 and Tyr150. The NAD(+) site is built by Leu159 and Ser161. Lys177 is a UDP-alpha-D-glucuronate binding site. Residue Thr178 coordinates NAD(+). UDP-alpha-D-glucuronate-binding residues include Asn185, Gly188, Lys191, and Arg192. Residues Ala200, Tyr231, and Lys235 each coordinate NAD(+). Tyr231 serves as the catalytic Proton acceptor. UDP-alpha-D-glucuronate is bound by residues Tyr245, Gln248, and Glu249. 3 residues coordinate NAD(+): Thr261, His267, and Arg272. An N-linked (GlcNAc...) asparagine glycan is attached at Asn316.

Belongs to the NAD(P)-dependent epimerase/dehydratase family. UDP-glucuronic acid decarboxylase subfamily. In terms of assembly, homodimer and homotetramer. Interacts with AKT1. NAD(+) is required as a cofactor. Ubiquitous. Detected in heart, brain, spleen, lung, testis, liver, skeletal muscle and kidney.

It is found in the golgi apparatus. The protein resides in the golgi stack membrane. The enzyme catalyses UDP-alpha-D-glucuronate + H(+) = UDP-alpha-D-xylose + CO2. It functions in the pathway nucleotide-sugar biosynthesis; UDP-alpha-D-xylose biosynthesis; UDP-alpha-D-xylose from UDP-alpha-D-glucuronate: step 1/1. Functionally, catalyzes the NAD-dependent decarboxylation of UDP-glucuronic acid to UDP-xylose. Necessary for the biosynthesis of the core tetrasaccharide in glycosaminoglycan biosynthesis. The polypeptide is UDP-glucuronic acid decarboxylase 1 (Rattus norvegicus (Rat)).